The following is a 385-amino-acid chain: Putative ESX-1 scaffolding and assembly protein SaeC (385 aa).

It localises to the cytoplasm. In terms of biological role, may be involved in assembly of the ESX-1 / type VII specialized secretion system (T7SS), which exports several proteins including EsxA and EsxB. Involved in DNA conjugation in recipient (MKD8) strain. This chain is Putative ESX-1 scaffolding and assembly protein SaeC, found in Mycolicibacterium smegmatis (strain ATCC 700084 / mc(2)155) (Mycobacterium smegmatis).